The chain runs to 164 residues: MDEENVDITEDELSVISDLELDSITRVVGTNEIKTYEDYKLEEANYLKVLDIIKKFSTSDTCECYRCELFERGDIGKFLTRSEFSKLAVLYWERCGRPRNSEALEAFIGRHICIRCAASILLSHHPVIAMRADMRLREIYIENGDKPASSSGTLFSAKGKGPRI.

This Lettuce big-vein associated virus (isolate Japan/Kagawa) (LBVaV) protein is Protein 4.